Reading from the N-terminus, the 570-residue chain is Urease subunit alpha (570 aa).

The Urease domain maps to 135 to 570 (GGLDIHVHFN…ELPLAQRYHL (436 aa)). Ni(2+) contacts are provided by His140, His142, and Lys219. At Lys219 the chain carries N6-carboxylysine. His221 contacts substrate. Positions 248 and 274 each coordinate Ni(2+). His322 functions as the Proton donor in the catalytic mechanism. Asp362 contributes to the Ni(2+) binding site.

The protein belongs to the metallo-dependent hydrolases superfamily. Urease alpha subunit family. As to quaternary structure, heterotrimer of UreA (gamma), UreB (beta) and UreC (alpha) subunits. Three heterotrimers associate to form the active enzyme. The cofactor is Ni cation. In terms of processing, carboxylation allows a single lysine to coordinate two nickel ions.

The protein localises to the cytoplasm. The enzyme catalyses urea + 2 H2O + H(+) = hydrogencarbonate + 2 NH4(+). It participates in nitrogen metabolism; urea degradation; CO(2) and NH(3) from urea (urease route): step 1/1. The protein is Urease subunit alpha of Natronomonas pharaonis (strain ATCC 35678 / DSM 2160 / CIP 103997 / JCM 8858 / NBRC 14720 / NCIMB 2260 / Gabara) (Halobacterium pharaonis).